Reading from the N-terminus, the 340-residue chain is Holliday junction branch migration complex subunit RuvB (340 aa).

Residues 1 to 184 (MNENLDPTNQ…FGIQSRLQYY (184 aa)) are large ATPase domain (RuvB-L). ATP-binding positions include L23, R24, G65, K68, T69, T70, 131–133 (EDF), R174, Y184, and R221. Residue T69 coordinates Mg(2+). Residues 185–255 (NAELLTTIVQ…IAKFALNALH (71 aa)) are small ATPAse domain (RuvB-S). A head domain (RuvB-H) region spans residues 258 to 340 (AHGLDEMDNK…VKANVQGGLF (83 aa)). Residues R313 and R318 each contribute to the DNA site.

It belongs to the RuvB family. Homohexamer. Forms an RuvA(8)-RuvB(12)-Holliday junction (HJ) complex. HJ DNA is sandwiched between 2 RuvA tetramers; dsDNA enters through RuvA and exits via RuvB. An RuvB hexamer assembles on each DNA strand where it exits the tetramer. Each RuvB hexamer is contacted by two RuvA subunits (via domain III) on 2 adjacent RuvB subunits; this complex drives branch migration. In the full resolvosome a probable DNA-RuvA(4)-RuvB(12)-RuvC(2) complex forms which resolves the HJ.

It is found in the cytoplasm. The enzyme catalyses ATP + H2O = ADP + phosphate + H(+). Functionally, the RuvA-RuvB-RuvC complex processes Holliday junction (HJ) DNA during genetic recombination and DNA repair, while the RuvA-RuvB complex plays an important role in the rescue of blocked DNA replication forks via replication fork reversal (RFR). RuvA specifically binds to HJ cruciform DNA, conferring on it an open structure. The RuvB hexamer acts as an ATP-dependent pump, pulling dsDNA into and through the RuvAB complex. RuvB forms 2 homohexamers on either side of HJ DNA bound by 1 or 2 RuvA tetramers; 4 subunits per hexamer contact DNA at a time. Coordinated motions by a converter formed by DNA-disengaged RuvB subunits stimulates ATP hydrolysis and nucleotide exchange. Immobilization of the converter enables RuvB to convert the ATP-contained energy into a lever motion, pulling 2 nucleotides of DNA out of the RuvA tetramer per ATP hydrolyzed, thus driving DNA branch migration. The RuvB motors rotate together with the DNA substrate, which together with the progressing nucleotide cycle form the mechanistic basis for DNA recombination by continuous HJ branch migration. Branch migration allows RuvC to scan DNA until it finds its consensus sequence, where it cleaves and resolves cruciform DNA. This Flavobacterium psychrophilum (strain ATCC 49511 / DSM 21280 / CIP 103535 / JIP02/86) protein is Holliday junction branch migration complex subunit RuvB.